An 81-amino-acid chain; its full sequence is ATP synthase subunit c, chloroplastic (81 aa).

A run of 2 helical transmembrane segments spans residues 7 to 27 (AASV…PGVG) and 57 to 77 (LAFM…LLFA).

Belongs to the ATPase C chain family. In terms of assembly, F-type ATPases have 2 components, F(1) - the catalytic core - and F(0) - the membrane proton channel. F(1) has five subunits: alpha(3), beta(3), gamma(1), delta(1), epsilon(1). F(0) has four main subunits: a(1), b(1), b'(1) and c(10-14). The alpha and beta chains form an alternating ring which encloses part of the gamma chain. F(1) is attached to F(0) by a central stalk formed by the gamma and epsilon chains, while a peripheral stalk is formed by the delta, b and b' chains.

It localises to the plastid. The protein resides in the chloroplast thylakoid membrane. Its function is as follows. F(1)F(0) ATP synthase produces ATP from ADP in the presence of a proton or sodium gradient. F-type ATPases consist of two structural domains, F(1) containing the extramembraneous catalytic core and F(0) containing the membrane proton channel, linked together by a central stalk and a peripheral stalk. During catalysis, ATP synthesis in the catalytic domain of F(1) is coupled via a rotary mechanism of the central stalk subunits to proton translocation. In terms of biological role, key component of the F(0) channel; it plays a direct role in translocation across the membrane. A homomeric c-ring of between 10-14 subunits forms the central stalk rotor element with the F(1) delta and epsilon subunits. The polypeptide is ATP synthase subunit c, chloroplastic (Arabis hirsuta (Hairy rock-cress)).